A 211-amino-acid chain; its full sequence is Large ribosomal subunit protein bL25 (211 aa).

The disordered stretch occupies residues 188–211 (APKAAKVSTDDEAAAPAEEAPAAE). A compositionally biased stretch (low complexity) spans 201 to 211 (AAPAEEAPAAE).

The protein belongs to the bacterial ribosomal protein bL25 family. CTC subfamily. Part of the 50S ribosomal subunit; part of the 5S rRNA/L5/L18/L25 subcomplex. Contacts the 5S rRNA. Binds to the 5S rRNA independently of L5 and L18.

Its function is as follows. This is one of the proteins that binds to the 5S RNA in the ribosome where it forms part of the central protuberance. This is Large ribosomal subunit protein bL25 from Colwellia psychrerythraea (strain 34H / ATCC BAA-681) (Vibrio psychroerythus).